Reading from the N-terminus, the 304-residue chain is Dermonecrotic toxin LiSicTox-betaIA1i (304 aa).

The signal sequence occupies residues 1 to 21 (MLLPAVISFIVYAVFLQEANG). The propeptide occupies 22-26 (HAAER). Residue His-38 is part of the active site. Residues Glu-58 and Asp-60 each contribute to the Mg(2+) site. His-74 acts as the Nucleophile in catalysis. 2 disulfide bridges follow: Cys-78–Cys-84 and Cys-80–Cys-223. Asp-118 is a Mg(2+) binding site.

This sequence belongs to the arthropod phospholipase D family. Class II subfamily. Class IIb sub-subfamily. Requires Mg(2+) as cofactor. As to expression, expressed by the venom gland.

It is found in the secreted. It catalyses the reaction an N-(acyl)-sphingosylphosphocholine = an N-(acyl)-sphingosyl-1,3-cyclic phosphate + choline. The catalysed reaction is an N-(acyl)-sphingosylphosphoethanolamine = an N-(acyl)-sphingosyl-1,3-cyclic phosphate + ethanolamine. The enzyme catalyses a 1-acyl-sn-glycero-3-phosphocholine = a 1-acyl-sn-glycero-2,3-cyclic phosphate + choline. It carries out the reaction a 1-acyl-sn-glycero-3-phosphoethanolamine = a 1-acyl-sn-glycero-2,3-cyclic phosphate + ethanolamine. In terms of biological role, dermonecrotic toxins cleave the phosphodiester linkage between the phosphate and headgroup of certain phospholipids (sphingolipid and lysolipid substrates), forming an alcohol (often choline) and a cyclic phosphate. This toxin acts on sphingomyelin (SM) with low activity. It may also act on ceramide phosphoethanolamine (CPE), lysophosphatidylcholine (LPC) and lysophosphatidylethanolamine (LPE), but not on lysophosphatidylserine (LPS), and lysophosphatidylglycerol (LPG). It acts by transphosphatidylation, releasing exclusively cyclic phosphate products as second products. Induces inflammatory response but no or very weak hemolysis, dermonecrosis, vascular permeability, edema, and cytotoxicity against renal epithelial cells. Causes swelling and erythema. In vivo, is not lethal to mice when intraperitoneally injected. This chain is Dermonecrotic toxin LiSicTox-betaIA1i, found in Loxosceles intermedia (Brown spider).